Here is a 370-residue protein sequence, read N- to C-terminus: Apolipoprotein A-V (370 aa).

The first 21 residues, 1–21 (MASMIALLTWALALLPALASA), serve as a signal peptide directing secretion. A Phosphoserine modification is found at Ser59.

This sequence belongs to the apolipoprotein A1/A4/E family. As to quaternary structure, interacts with GPIHBP1. Interacts with SORL1; this interaction leads to APOA5 internalization and sorting either to lysosomes and degradation, or to the trans-Golgi network.

It localises to the secreted. It is found in the early endosome. The protein localises to the late endosome. Its subcellular location is the golgi apparatus. The protein resides in the trans-Golgi network. Minor apolipoprotein mainly associated with HDL and to a lesser extent with VLDL. May also be associated with chylomicrons. Important determinant of plasma triglyceride (TG) levels by both being a potent stimulator of apo-CII lipoprotein lipase (LPL) TG hydrolysis and an inhibitor of the hepatic VLDL-TG production rate (without affecting the VLDL-apoB production rate). Activates poorly lecithin:cholesterol acyltransferase (LCAT) and does not enhance efflux of cholesterol from macrophages. Binds heparin. This Acinonyx jubatus (Cheetah) protein is Apolipoprotein A-V (APOA5).